The chain runs to 134 residues: Loki profilin-1 (134 aa).

A loki loop region spans residues 55-62 (LALGKKGI).

This sequence belongs to the Asgard profilin family.

The protein localises to the cytoplasm. Its subcellular location is the cytoskeleton. Its activity is regulated as follows. Inhibition of rabbit actin polymerization is reduced by phosphatidylinositol-(4,5)-P2(1,2-dipalmitoyl), a soluble form of the phospholipid phosphatidylinositol, suggesting an unknown lipid might regulate actin-profilin interaction in vivo. Functionally, binds to actin and affects the structure of the cytoskeleton. At high concentrations inhibits spontaneous rabbit actin nucleation. This strongly suggests this archaea has a profilin-regulated actin system, and actin-type genes can be identified in this organism. This chain is Loki profilin-1, found in Lokiarchaeum sp. (strain GC14_75).